We begin with the raw amino-acid sequence, 137 residues long: Putative pre-16S rRNA nuclease (137 aa).

The protein belongs to the YqgF nuclease family.

Its subcellular location is the cytoplasm. Could be a nuclease involved in processing of the 5'-end of pre-16S rRNA. The protein is Putative pre-16S rRNA nuclease of Anaeromyxobacter dehalogenans (strain 2CP-1 / ATCC BAA-258).